The following is an 816-amino-acid chain: Neuroligin-4, X-linked (816 aa).

Residues methionine 1–serine 41 form the signal peptide. Residues glutamine 42–serine 676 are Extracellular-facing. A glycan (N-linked (GlcNAc...) asparagine) is linked at asparagine 102. 2 cysteine pairs are disulfide-bonded: cysteine 110–cysteine 146 and cysteine 306–cysteine 317. Positions glutamine 359–asparagine 364 are interaction with NRXN1. Cysteine 476 and cysteine 510 form a disulfide bridge. A glycan (N-linked (GlcNAc...) asparagine) is linked at asparagine 511. The segment at threonine 636 to glutamate 659 is disordered. The span at histidine 649–proline 658 shows a compositional bias: basic and acidic residues. The helical transmembrane segment at valine 677 to tyrosine 697 threads the bilayer. Residues tyrosine 698–valine 816 lie on the Cytoplasmic side of the membrane. Residue serine 712 is modified to Phosphoserine.

The protein belongs to the type-B carboxylesterase/lipase family. Homodimer. Interacts with NRXN1 in a calcium-dependent manner. Interaction with neurexins is mediated by heparan sulfate glycan modification on neurexin. Interacts through its C-terminus with DLG4/PSD-95 third PDZ domain. In terms of tissue distribution, expressed at highest levels in heart. Expressed at lower levels in liver, skeletal muscle and pancreas and at very low levels in brain.

Its subcellular location is the cell membrane. It localises to the postsynaptic density membrane. Its function is as follows. Cell surface protein involved in cell-cell-interactions via its interactions with neurexin family members. The polypeptide is Neuroligin-4, X-linked (NLGN4X) (Homo sapiens (Human)).